The chain runs to 269 residues: Ribonuclease HII (269 aa).

The RNase H type-2 domain occupies 79 to 269; the sequence is TYLAGADEVG…SFLKNILNTF (191 aa). The a divalent metal cation site is built by D85, E86, and D182.

The protein belongs to the RNase HII family. Mn(2+) serves as cofactor. The cofactor is Mg(2+).

The protein resides in the cytoplasm. The enzyme catalyses Endonucleolytic cleavage to 5'-phosphomonoester.. Functionally, endonuclease that specifically degrades the RNA of RNA-DNA hybrids. The polypeptide is Ribonuclease HII (Clostridium novyi (strain NT)).